The chain runs to 1394 residues: Leucine-rich PPR motif-containing protein, mitochondrial (1394 aa).

The N-terminal 59 residues, 1-59 (MAALLRSARWLLRAGAAPRLPLSLRLLPGGPGRLHAASYLPAARAGPVAGGLLSPARLY), are a transit peptide targeting the mitochondrion. PPR repeat units follow at residues 126–160 (LLRS…GAVY), 161–195 (DVSH…NIQP), 196–230 (NRVT…DLPV), 231–265 (TEAV…GIEP), 266–300 (GPDT…ELHL), 301–335 (MDRD…RRYI), 403–437 (HSFP…GFPI), and 438–472 (RPHY…GVHP). N6-acetyllysine is present on residues K155, K187, and K226. K292 carries the post-translational modification N6-acetyllysine. Residues K463 and K613 each carry the N6-acetyllysine modification. PPR repeat units follow at residues 678–709 (IRDV…ESDM), 710–746 (VTGG…SAVL), 747–784 (DTGK…IKDT), 785–820 (TALS…LAEP), 821–856 (STNI…KVLP), and 954–988 (RDQM…NVIP). The interval 712–1067 (GGYAALINLC…AKEQNIVFNA (356 aa)) is interaction with BECN1 and Aedes aegypti venom allergen-1. N6-acetyllysine is present on residues K726 and K750. S1026, S1027, and S1029 each carry phosphoserine. PPR repeat units lie at residues 1031-1065 (TEPD…NIVF), 1066-1102 (NAET…GFTL), 1103-1137 (NDAA…QQTP), 1138-1175 (SRLA…IGLS), 1176-1210 (KMVF…ENKV), and 1317-1351 (KEEA…NTKL). Residues 1121–1394 (KEAVTTLKTV…QLRKLRENSS (274 aa)) form an RNA-binding region. A Phosphothreonine modification is found at T1136. At S1138 the chain carries Phosphoserine.

Component of mRNP complexes associated with HNRPA1. Component of the complex, at least composed of LRPPRC, BECN1 and BCL2; the interactions prevent BECN1 from forming an autophagy-inducing complex with PIK3C3. Interacts with CECR2, HEBP2, MAP1S and UXT. Interacts with PPARGC1A. Interacts with FOXO1. Interacts (via N-terminus) with EIF4E; the interaction promotes association of EIF4E with 4ESE-containing mRNAs. Interacts with exportin XPO1/CRM1; interacts both alone and in complex with EIF4E and 4ESE-containing mRNAs to form an EIF4E-dependent mRNA export complex. Interacts with importin IPO8; the interaction occurs when LRPPRC is in its RNA-free form and returns LRPPRC to the nucleus for further export rounds. Interacts with BECN1. Interacts with Aedes aegypti venom allergen-1; the interaction interrupts BECN1 and LRPPRC association. Expressed ubiquitously. Expression is highest in heart, skeletal muscle, kidney and liver, intermediate in brain, non-mucosal colon, spleen and placenta, and lowest in small intestine, thymus, lung and peripheral blood leukocytes.

Its subcellular location is the mitochondrion. It localises to the nucleus. It is found in the nucleoplasm. The protein resides in the nucleus inner membrane. The protein localises to the nucleus outer membrane. Its function is as follows. May play a role in RNA metabolism in both nuclei and mitochondria. In the nucleus binds to HNRPA1-associated poly(A) mRNAs and is part of nmRNP complexes at late stages of mRNA maturation which are possibly associated with nuclear mRNA export. Positively modulates nuclear export of mRNAs containing the EIF4E sensitivity element (4ESE) by binding simultaneously to both EIF4E and the 4ESE and acting as a platform for assembly for the RNA export complex. Also binds to exportin XPO1/CRM1 to engage the nuclear pore and traffic the bound mRNAs to the cytoplasm. May bind mature mRNA in the nucleus outer membrane. In mitochondria binds to poly(A) mRNA. Plays a role in translation or stability of mitochondrially encoded cytochrome c oxidase (COX) subunits. May be involved in transcription regulation. Cooperates with PPARGC1A to regulate certain mitochondrially encoded genes and gluconeogenic genes and may regulate docking of PPARGC1A to transcription factors. Seems to be involved in the transcription regulation of the multidrug-related genes MDR1 and MVP. Part of a nuclear factor that binds to the invMED1 element of MDR1 and MVP gene promoters. Binds single-stranded DNA. Required for maintaining mitochondrial potential. Suppresses the initiation of basal levels of autophagy and mitophagy by sustaining BCL2 levels. This is Leucine-rich PPR motif-containing protein, mitochondrial (LRPPRC) from Homo sapiens (Human).